The sequence spans 105 residues: Large ribosomal subunit protein uL24 (105 aa).

This sequence belongs to the universal ribosomal protein uL24 family. Part of the 50S ribosomal subunit.

Functionally, one of two assembly initiator proteins, it binds directly to the 5'-end of the 23S rRNA, where it nucleates assembly of the 50S subunit. In terms of biological role, one of the proteins that surrounds the polypeptide exit tunnel on the outside of the subunit. This is Large ribosomal subunit protein uL24 from Aliivibrio salmonicida (strain LFI1238) (Vibrio salmonicida (strain LFI1238)).